Consider the following 291-residue polypeptide: N-acetylmannosamine kinase (291 aa).

ATP contacts are provided by residues 5-12 and 132-139; these read AIDIGGTK and GVGGGVVS. Zn(2+)-binding residues include histidine 156, cysteine 166, cysteine 168, and cysteine 173.

The protein belongs to the ROK (NagC/XylR) family. NanK subfamily. Homodimer.

The enzyme catalyses an N-acyl-D-mannosamine + ATP = an N-acyl-D-mannosamine 6-phosphate + ADP + H(+). The protein operates within amino-sugar metabolism; N-acetylneuraminate degradation; D-fructose 6-phosphate from N-acetylneuraminate: step 2/5. Its function is as follows. Catalyzes the phosphorylation of N-acetylmannosamine (ManNAc) to ManNAc-6-P. The protein is N-acetylmannosamine kinase of Escherichia coli O139:H28 (strain E24377A / ETEC).